Here is a 394-residue protein sequence, read N- to C-terminus: MKAKRMTDLDLTGKRVLIREDLNVPIKDGQVADDTRVRAAAESIRQAMQAGGRVLVMSHLGRPKEGEYDAEASMAPVARRLGEILGCEVPVVRDWLEGVDVPEGGVALAENVRFQPGETKDDEALSRRMAALCDVFVMDAFGTAHRAQASTHGVARFAPEACAGPLLSAELEALGKALDNPARPMIAIVGGSKVSGKVQVLEALTHKVDQLIVGGGIANTFIAAAGYSVGKSLYEADFVDTAKRLMEEARAKGGEIPIPEDVVTARDFSADAEAHVHPVDAVPDDEMILDVGPQTRARYDGMLRNAGTVVWNGPVGVFEMAPFAGGTRALAEAIAASDGFSIAGGGDTLAAVEQFGITDQVSYISTGGGAFLEFLEGRVLPGVAALEQHAAAHS.

Residues 21-23 (DLN), Arg36, 59-62 (HLGR), Arg113, and Arg146 each bind substrate. ATP-binding positions include Lys197, Glu319, and 345-348 (GGDT).

This sequence belongs to the phosphoglycerate kinase family. In terms of assembly, monomer.

The protein resides in the cytoplasm. The catalysed reaction is (2R)-3-phosphoglycerate + ATP = (2R)-3-phospho-glyceroyl phosphate + ADP. The protein operates within carbohydrate degradation; glycolysis; pyruvate from D-glyceraldehyde 3-phosphate: step 2/5. The sequence is that of Phosphoglycerate kinase from Halorhodospira halophila (strain DSM 244 / SL1) (Ectothiorhodospira halophila (strain DSM 244 / SL1)).